Consider the following 69-residue polypeptide: Cytochrome c oxidase subunit 8A, mitochondrial (69 aa).

Residues 1-25 (MSSLTPLLLRSLTGPARRLMVPRAQ) constitute a mitochondrion transit peptide. The SIFI-degron signature appears at 2–19 (SSLTPLLLRSLTGPARRL). Residues 26-36 (VHSKPPREQLG) are Mitochondrial matrix-facing. The chain crosses the membrane as a helical span at residues 37-60 (VLDITIGLTSCFVCCLLPAGWVLS). At 61-69 (HLESYKKRE) the chain is on the mitochondrial intermembrane side.

Belongs to the cytochrome c oxidase VIII family. As to quaternary structure, component of the cytochrome c oxidase (complex IV, CIV), a multisubunit enzyme composed of 14 subunits. The complex is composed of a catalytic core of 3 subunits MT-CO1, MT-CO2 and MT-CO3, encoded in the mitochondrial DNA, and 11 supernumerary subunits COX4I, COX5A, COX5B, COX6A, COX6B, COX6C, COX7A, COX7B, COX7C, COX8 and NDUFA4, which are encoded in the nuclear genome. The complex exists as a monomer or a dimer and forms supercomplexes (SCs) in the inner mitochondrial membrane with NADH-ubiquinone oxidoreductase (complex I, CI) and ubiquinol-cytochrome c oxidoreductase (cytochrome b-c1 complex, complex III, CIII), resulting in different assemblies (supercomplex SCI(1)III(2)IV(1) and megacomplex MCI(2)III(2)IV(2)). In response to mitochondrial stress, the precursor protein is ubiquitinated by the SIFI complex in the cytoplasm before mitochondrial import, leading to its degradation. Within the SIFI complex, UBR4 initiates ubiquitin chain that are further elongated or branched by KCMF1.

It localises to the mitochondrion inner membrane. The protein operates within energy metabolism; oxidative phosphorylation. Functionally, component of the cytochrome c oxidase, the last enzyme in the mitochondrial electron transport chain which drives oxidative phosphorylation. The respiratory chain contains 3 multisubunit complexes succinate dehydrogenase (complex II, CII), ubiquinol-cytochrome c oxidoreductase (cytochrome b-c1 complex, complex III, CIII) and cytochrome c oxidase (complex IV, CIV), that cooperate to transfer electrons derived from NADH and succinate to molecular oxygen, creating an electrochemical gradient over the inner membrane that drives transmembrane transport and the ATP synthase. Cytochrome c oxidase is the component of the respiratory chain that catalyzes the reduction of oxygen to water. Electrons originating from reduced cytochrome c in the intermembrane space (IMS) are transferred via the dinuclear copper A center (CU(A)) of subunit 2 and heme A of subunit 1 to the active site in subunit 1, a binuclear center (BNC) formed by heme A3 and copper B (CU(B)). The BNC reduces molecular oxygen to 2 water molecules using 4 electrons from cytochrome c in the IMS and 4 protons from the mitochondrial matrix. This chain is Cytochrome c oxidase subunit 8A, mitochondrial (Cox8a), found in Rattus norvegicus (Rat).